The primary structure comprises 412 residues: NADH-quinone oxidoreductase subunit D (412 aa).

Belongs to the complex I 49 kDa subunit family. NDH-1 is composed of 14 different subunits. Subunits NuoB, C, D, E, F, and G constitute the peripheral sector of the complex.

The protein localises to the cell inner membrane. The enzyme catalyses a quinone + NADH + 5 H(+)(in) = a quinol + NAD(+) + 4 H(+)(out). NDH-1 shuttles electrons from NADH, via FMN and iron-sulfur (Fe-S) centers, to quinones in the respiratory chain. The immediate electron acceptor for the enzyme in this species is believed to be ubiquinone. Couples the redox reaction to proton translocation (for every two electrons transferred, four hydrogen ions are translocated across the cytoplasmic membrane), and thus conserves the redox energy in a proton gradient. This Sulfurimonas denitrificans (strain ATCC 33889 / DSM 1251) (Thiomicrospira denitrificans (strain ATCC 33889 / DSM 1251)) protein is NADH-quinone oxidoreductase subunit D.